Reading from the N-terminus, the 411-residue chain is Serine hydroxymethyltransferase (411 aa).

120–122 (GHL) contacts (6S)-5,6,7,8-tetrahydrofolate. Lys225 is modified (N6-(pyridoxal phosphate)lysine). Residues Glu241 and 350–352 (SPF) each bind (6S)-5,6,7,8-tetrahydrofolate.

This sequence belongs to the SHMT family. Homodimer. Requires pyridoxal 5'-phosphate as cofactor.

It is found in the cytoplasm. The catalysed reaction is (6R)-5,10-methylene-5,6,7,8-tetrahydrofolate + glycine + H2O = (6S)-5,6,7,8-tetrahydrofolate + L-serine. It functions in the pathway one-carbon metabolism; tetrahydrofolate interconversion. Its pathway is amino-acid biosynthesis; glycine biosynthesis; glycine from L-serine: step 1/1. Functionally, catalyzes the reversible interconversion of serine and glycine with tetrahydrofolate (THF) serving as the one-carbon carrier. This reaction serves as the major source of one-carbon groups required for the biosynthesis of purines, thymidylate, methionine, and other important biomolecules. Also exhibits THF-independent aldolase activity toward beta-hydroxyamino acids, producing glycine and aldehydes, via a retro-aldol mechanism. The chain is Serine hydroxymethyltransferase from Limosilactobacillus fermentum (strain NBRC 3956 / LMG 18251) (Lactobacillus fermentum).